Reading from the N-terminus, the 107-residue chain is Iron-sulfur cluster assembly protein CyaY (107 aa).

Belongs to the frataxin family.

Involved in iron-sulfur (Fe-S) cluster assembly. May act as a regulator of Fe-S biogenesis. The chain is Iron-sulfur cluster assembly protein CyaY from Yersinia intermedia.